We begin with the raw amino-acid sequence, 178 residues long: Ribosome maturation factor RimP (178 aa).

This sequence belongs to the RimP family.

The protein resides in the cytoplasm. Required for maturation of 30S ribosomal subunits. The chain is Ribosome maturation factor RimP from Cutibacterium acnes (strain DSM 16379 / KPA171202) (Propionibacterium acnes).